The chain runs to 210 residues: Cell division protein SepF (210 aa).

Composition is skewed to low complexity over residues 36-47 (QQQQTPAAVPTQ) and 59-69 (RASATTATTAS). Disordered regions lie at residues 36–69 (QQQQ…TTAS) and 182–210 (NEMS…QMIQ).

Belongs to the SepF family. In terms of assembly, homodimer. Interacts with FtsZ.

It is found in the cytoplasm. Functionally, cell division protein that is part of the divisome complex and is recruited early to the Z-ring. Probably stimulates Z-ring formation, perhaps through the cross-linking of FtsZ protofilaments. Its function overlaps with FtsA. This chain is Cell division protein SepF, found in Trichodesmium erythraeum (strain IMS101).